A 919-amino-acid polypeptide reads, in one-letter code: Synphilin-1 (919 aa).

Disordered regions lie at residues 80–99 (SPLK…DQKN), 108–140 (GGES…STSL), and 287–313 (SSAA…EERS). The segment covering 299-308 (SGLNRTSSQG) has biased composition (polar residues). ANK repeat units lie at residues 349 to 380 (NGNN…CLNE), 384 to 413 (EKLT…AIAE), 419 to 448 (DFPS…EQGI), and 456 to 485 (DGNS…NVTM). Residues 515–552 (CMSLASQVVKLTKQLKEQTVERVTLQNQLQQFLEAQKS) adopt a coiled-coil conformation. 3 disordered regions span residues 549 to 615 (AQKS…KDED), 666 to 713 (RLRQ…SMDS), and 728 to 919 (SGGR…NKAA). A compositionally biased stretch (low complexity) spans 555 to 571 (KSLPSSPSSPSSPASRK). The stretch at 603-632 (ASSRARPKAKDEDSDKILRQLLGKEISENV) is one ANK 5 repeat. Residues 667-685 (LRQLMQRSLSESDTDSNNS) are compositionally biased toward low complexity. Positions 686–700 (EDPKTTPVRKADRPR) are enriched in basic and acidic residues. The stretch at 699 to 729 (PRPQPIVESVESMDSAESLHLMIKKHTLASG) is one ANK 6 repeat. Low complexity predominate over residues 774–785 (PSGDPQQPSPDS). A compositionally biased stretch (basic and acidic residues) spans 833 to 842 (NGEKDKDKGR). Residues 844–854 (LQRTSTSNESG) show a composition bias toward polar residues. The segment covering 874-886 (NQNNNNNYQAANQ) has biased composition (low complexity).

Homodimer. Heterodimer of isoform 1 and isoform 2. Interacts with SIAH1, SIAH2, SNCA, RNF19A and PRKN. Isoform 2 has a strong tendency to form aggregates and can sequester isoform 1. Post-translationally, ubiquitinated; mediated by SIAH1, SIAH2 or RNF19A and leading to its subsequent proteasomal degradation. In the absence of proteasomal degradation, ubiquitinated SNCAIP accumulates in cytoplasmic inclusion bodies. Isoform 2 is subject to limited ubiquitination that does not lead to proteasomal degradation. As to expression, detected in brain (at protein level). Widely expressed, with highest levels in brain, heart and placenta.

The protein resides in the cytoplasm. Its function is as follows. Isoform 2 inhibits the ubiquitin ligase activity of SIAH1 and inhibits proteasomal degradation of target proteins. Isoform 2 inhibits autoubiquitination and proteasomal degradation of SIAH1, and thereby increases cellular levels of SIAH. Isoform 2 modulates SNCA monoubiquitination by SIAH1. In Homo sapiens (Human), this protein is Synphilin-1 (SNCAIP).